Here is a 372-residue protein sequence, read N- to C-terminus: Dual-specificity RNA methyltransferase RlmN (372 aa).

Residue glutamate 94 is the Proton acceptor of the active site. The region spanning 100–339 is the Radical SAM core domain; the sequence is DGDRATLCVS…VTIRKTRGDD (240 aa). Cysteine 107 and cysteine 344 are joined by a disulfide. Residues cysteine 114, cysteine 118, and cysteine 121 each contribute to the [4Fe-4S] cluster site. S-adenosyl-L-methionine contacts are provided by residues 168–169, serine 200, 222–224, and asparagine 301; these read GE and SLH. Cysteine 344 serves as the catalytic S-methylcysteine intermediate.

It belongs to the radical SAM superfamily. RlmN family. [4Fe-4S] cluster is required as a cofactor.

Its subcellular location is the cytoplasm. The enzyme catalyses adenosine(2503) in 23S rRNA + 2 reduced [2Fe-2S]-[ferredoxin] + 2 S-adenosyl-L-methionine = 2-methyladenosine(2503) in 23S rRNA + 5'-deoxyadenosine + L-methionine + 2 oxidized [2Fe-2S]-[ferredoxin] + S-adenosyl-L-homocysteine. It catalyses the reaction adenosine(37) in tRNA + 2 reduced [2Fe-2S]-[ferredoxin] + 2 S-adenosyl-L-methionine = 2-methyladenosine(37) in tRNA + 5'-deoxyadenosine + L-methionine + 2 oxidized [2Fe-2S]-[ferredoxin] + S-adenosyl-L-homocysteine. Its function is as follows. Specifically methylates position 2 of adenine 2503 in 23S rRNA and position 2 of adenine 37 in tRNAs. m2A2503 modification seems to play a crucial role in the proofreading step occurring at the peptidyl transferase center and thus would serve to optimize ribosomal fidelity. The protein is Dual-specificity RNA methyltransferase RlmN of Aliivibrio fischeri (strain MJ11) (Vibrio fischeri).